The sequence spans 136 residues: ATP synthase epsilon chain (136 aa).

Belongs to the ATPase epsilon chain family. As to quaternary structure, F-type ATPases have 2 components, CF(1) - the catalytic core - and CF(0) - the membrane proton channel. CF(1) has five subunits: alpha(3), beta(3), gamma(1), delta(1), epsilon(1). CF(0) has three main subunits: a, b and c.

Its subcellular location is the cell inner membrane. Produces ATP from ADP in the presence of a proton gradient across the membrane. The chain is ATP synthase epsilon chain from Myxococcus xanthus (strain DK1622).